The following is a 1065-amino-acid chain: Inversin (1065 aa).

16 ANK repeats span residues Ser13–Asp42, Phe47–Lys76, Ser80–Lys110, Glu113–Thr144, Asn148–Ile177, Glu181–Leu213, Glu220–Ser250, Leu254–Ile283, Gln288–Asp317, Glu321–Ile350, Tyr356–Ala385, Met389–Leu418, Asp422–Val451, Ala455–Ile484, Glu488–Gln517, and Glu523–Ala553. 3-hydroxyasparagine is present on Asn75. Positions Arg490 to Asn498 match the D-box 1 motif. Residues Gln555–Lys584 form the IQ 1 domain. Over residues Arg589–Asp616 the composition is skewed to basic and acidic residues. Disordered regions lie at residues Arg589–Asn833 and His847–Gly886. The segment covering Pro627–Pro640 has biased composition (polar residues). Ser661 is modified (phosphoserine). Residues Ser677 to Arg686 are compositionally biased toward polar residues. 6 stretches are compositionally biased toward basic and acidic residues: residues Arg687–Lys697, Arg706–Arg715, Glu723–Ala736, Gly752–Arg762, His770–Ala786, and Glu853–Glu863. The D-box 2 signature appears at Arg909–Asn917. An IQ 2 domain is found at Lys916–Leu945. Residues Thr976–Ser999 form a disordered region. Residues Pro983 to Lys994 show a composition bias toward low complexity.

As to quaternary structure, binds calmodulin via its IQ domains. Interacts with APC2. Interacts with alpha-, beta-, and gamma-catenin. Interacts with N-cadherin (CDH2). Interacts with microtubules. Interacts with NPHP1. Interacts with DVL1, PRICKLE (PRICKLE1 or PRICKLE2) and Strabismus (VANGL1 or VANGL2). Interacts with IQCB1; the interaction likely requires additional interactors. Component of a complex containing at least ANKS6, INVS, NEK8 and NPHP3. ANKS6 may organize complex assembly by linking INVS and NPHP3 to NEK8 and INVS may target the complex to the proximal ciliary axoneme. May be ubiquitinated via its interaction with APC2. Post-translationally, hydroxylated at Asn-75, most probably by HIF1AN. Widely expressed. Strongly expressed in the primary cilia of renal tubular cells.

Its subcellular location is the cytoplasm. The protein localises to the cytoskeleton. It localises to the spindle. The protein resides in the membrane. It is found in the nucleus. Its subcellular location is the cell projection. The protein localises to the cilium. Required for normal renal development and establishment of left-right axis. Probably acts as a molecular switch between different Wnt signaling pathways. Inhibits the canonical Wnt pathway by targeting cytoplasmic disheveled (DVL1) for degradation by the ubiquitin-proteasome. This suggests that it is required in renal development to oppose the repression of terminal differentiation of tubular epithelial cells by Wnt signaling. Involved in the organization of apical junctions in kidney cells together with NPHP1, NPHP4 and RPGRIP1L/NPHP8. Does not seem to be strictly required for ciliogenesis. The sequence is that of Inversin (INVS) from Homo sapiens (Human).